Reading from the N-terminus, the 182-residue chain is Large ribosomal subunit protein uL10 (182 aa).

It belongs to the universal ribosomal protein uL10 family. As to quaternary structure, part of the ribosomal stalk of the 50S ribosomal subunit. The N-terminus interacts with L11 and the large rRNA to form the base of the stalk. The C-terminus forms an elongated spine to which L12 dimers bind in a sequential fashion forming a multimeric L10(L12)X complex.

Forms part of the ribosomal stalk, playing a central role in the interaction of the ribosome with GTP-bound translation factors. This is Large ribosomal subunit protein uL10 from Microcystis aeruginosa (strain NIES-843 / IAM M-2473).